Reading from the N-terminus, the 391-residue chain is Formate-dependent phosphoribosylglycinamide formyltransferase (391 aa).

Residues 18–19 (EL) and Glu-78 contribute to the N(1)-(5-phospho-beta-D-ribosyl)glycinamide site. ATP is bound by residues Arg-110, Lys-151, 156–161 (SSGKGQ), 191–194 (EEFI), and Glu-199. The region spanning 115–305 (DLASKDLKIK…EFELHLRAFL (191 aa)) is the ATP-grasp domain. Residues Glu-264 and Glu-276 each coordinate Mg(2+). Residues Asp-283, Lys-353, and 360 to 361 (RR) contribute to the N(1)-(5-phospho-beta-D-ribosyl)glycinamide site.

This sequence belongs to the PurK/PurT family. Homodimer.

The enzyme catalyses N(1)-(5-phospho-beta-D-ribosyl)glycinamide + formate + ATP = N(2)-formyl-N(1)-(5-phospho-beta-D-ribosyl)glycinamide + ADP + phosphate + H(+). Its pathway is purine metabolism; IMP biosynthesis via de novo pathway; N(2)-formyl-N(1)-(5-phospho-D-ribosyl)glycinamide from N(1)-(5-phospho-D-ribosyl)glycinamide (formate route): step 1/1. Involved in the de novo purine biosynthesis. Catalyzes the transfer of formate to 5-phospho-ribosyl-glycinamide (GAR), producing 5-phospho-ribosyl-N-formylglycinamide (FGAR). Formate is provided by PurU via hydrolysis of 10-formyl-tetrahydrofolate. The sequence is that of Formate-dependent phosphoribosylglycinamide formyltransferase from Prochlorococcus marinus (strain AS9601).